The sequence spans 1019 residues: Sca1 complex protein phr (1019 aa).

4 disordered regions span residues 89–118, 131–202, 265–287, and 512–546; these read IVIN…SSNF, AFNN…INNN, QQLN…NSAN, and STNN…TNNL. A compositionally biased stretch (low complexity) spans 93–102; the sequence is SSSSSSSSSS. Residues 141–155 show a composition bias toward basic and acidic residues; sequence NRKEKEKDKDKDHQD. The stretch at 158–188 forms a coiled coil; it reads NINNINNINNNINNNINNNNNNNNNNNNNNN. The span at 158 to 202 shows a compositional bias: low complexity; sequence NINNINNINNNINNNINNNNNNNNNNNNNNNMHNPTSSSPSINNN. Residues 735–836 enclose the PH domain; the sequence is EIKKKGYLFK…WIKAIKFNCF (102 aa). The span at 860-872 shows a compositional bias: low complexity; that stretch reads VAGSGSNNGNNNG. 3 disordered regions span residues 860-890, 904-951, and 977-1019; these read VAGS…GSFI, NLSI…QQQL, and SSYT…SKLK. Residues 879-890 show a composition bias toward polar residues; sequence TTQQLNNSGSFI. Positions 977 to 986 are enriched in low complexity; sequence SSYTDSMSGS. The span at 987–1019 shows a compositional bias: polar residues; it reads PPDSNGQVFPQSPQLKKTLFQRTTSFSKGSKLK.

As to quaternary structure, component of the Sca1 complex composed of at least gefA, gefH, scaA, phr, and the protein phosphatase 2A subunits pppA and pho2B. Interacts directly with gefH.

It localises to the cell membrane. Its function is as follows. Component of the Sca1 complex, a regulator of cell motility, chemotaxis and signal relay. The Sca1 complex is recruited to the plasma membrane in a chemoattractant- and F-actin-dependent manner and is enriched at the leading edge of chemotaxing cells where it regulates F-actin dynamics and signal relay by controlling the activation of rasC and the downstream target of rapamycin complex 2 (TORC2)-Akt/protein kinase B (PKB) pathway. In Dictyostelium discoideum (Social amoeba), this protein is Sca1 complex protein phr.